Consider the following 689-residue polypeptide: DNA ligase (689 aa).

NAD(+) is bound by residues 40–44, 89–90, and Glu121; these read DAEYD and SL. The active-site N6-AMP-lysine intermediate is Lys123. Residues Arg144, Glu179, Lys295, and Lys319 each contribute to the NAD(+) site. The Zn(2+) site is built by Cys413, Cys416, Cys431, and Cys437. The 80-residue stretch at 610–689 folds into the BRCT domain; that stretch reads REQSSLTGKI…AEWLTLVRDI (80 aa).

It belongs to the NAD-dependent DNA ligase family. LigA subfamily. It depends on Mg(2+) as a cofactor. The cofactor is Mn(2+).

The catalysed reaction is NAD(+) + (deoxyribonucleotide)n-3'-hydroxyl + 5'-phospho-(deoxyribonucleotide)m = (deoxyribonucleotide)n+m + AMP + beta-nicotinamide D-nucleotide.. In terms of biological role, DNA ligase that catalyzes the formation of phosphodiester linkages between 5'-phosphoryl and 3'-hydroxyl groups in double-stranded DNA using NAD as a coenzyme and as the energy source for the reaction. It is essential for DNA replication and repair of damaged DNA. This Rickettsia bellii (strain RML369-C) protein is DNA ligase.